We begin with the raw amino-acid sequence, 367 residues long: Coiled-coil domain-containing protein 34 (367 aa).

Residue serine 55 is modified to Phosphoserine. Disordered regions lie at residues 77-105 (FPFGADDSEGEDEEALDEDARESESKVES), 191-228 (QKKNKQERKEREQKINKEMEEKEAKKREKEHLQEKAKE), and 310-349 (YNPIPWKPIHMPPPKEAKSGPGKKSKRHAASQPLPSSSLA). The segment covering 82 to 97 (DDSEGEDEEALDEDAR) has biased composition (acidic residues). 2 coiled-coil regions span residues 87-108 (EDEEALDEDARESESKVESLEG) and 153-280 (RLQQ…AKNK). The segment covering 197–228 (ERKEREQKINKEMEEKEAKKREKEHLQEKAKE) has biased composition (basic and acidic residues). The span at 339–349 (ASQPLPSSSLA) shows a compositional bias: low complexity.

As to expression, expressed in testis and sperm.

The protein resides in the cell projection. Its subcellular location is the cilium. The protein localises to the flagellum. In terms of biological role, involved in spermatogenesis. Has a probable role in anterograde intraflagellar transport which is essential for the formation of sperm flagella. This Mus musculus (Mouse) protein is Coiled-coil domain-containing protein 34 (Ccdc34).